We begin with the raw amino-acid sequence, 553 residues long: T-complex protein 1 subunit eta (553 aa).

Gly-41 provides a ligand contact to ADP. Gly-41 is a binding site for ATP. Asp-92 contributes to the Mg(2+) binding site. Residues Gly-93, Thr-94, Thr-95, Ser-96, Ser-164, and Ser-165 each coordinate ADP. An ATP-binding site is contributed by Gly-93. ATP is bound at residue Ser-96. ATP is bound by residues Arg-398 and Gly-409. 3 residues coordinate ADP: Gly-409, Glu-494, and Arg-499. An ATP-binding site is contributed by Arg-499. Positions Pro-523–Ser-553 are disordered. Over residues Gly-539–Ser-553 the composition is skewed to low complexity.

In terms of assembly, component of the chaperonin-containing T-complex (TRiC), a hexadecamer composed of two identical back-to-back stacked rings enclosing a protein folding chamber. Each ring is made up of eight different subunits: TCP1/CCT1, CCT2, CCT3, CCT4, CCT5, CCT6A/CCT6, CCT7, CCT8.

It is found in the cytoplasm. The enzyme catalyses ATP + H2O = ADP + phosphate + H(+). Component of the chaperonin-containing T-complex (TRiC), a molecular chaperone complex that assists the folding of actin, tubulin and other proteins upon ATP hydrolysis. The protein is T-complex protein 1 subunit eta of Gallus gallus (Chicken).